The following is a 330-amino-acid chain: Ribosome production factor 1 (330 aa).

2 disordered regions span residues 1–32 (MKAVKAPVEEMDQAECEVKEEKSASGPCFPPT) and 53–83 (EEKRKKRMELKKKKKKERKALDDKAPPKEVP). Positions 55 to 70 (KRKKRMELKKKKKKER) are enriched in basic residues. Basic and acidic residues predominate over residues 71–83 (KALDDKAPPKEVP). The Brix domain maps to 123–306 (PKVLITTSDR…LRSLQKGTFD (184 aa)). Positions 284–301 (VGIQELGPRFTLKLRSLQ) are RNA-binding.

The protein localises to the nucleus. It is found in the nucleolus. May be required for ribosome biogenesis. The protein is Ribosome production factor 1 (rpf1) of Danio rerio (Zebrafish).